Reading from the N-terminus, the 332-residue chain is Fructose-1,6-bisphosphatase class 1 (332 aa).

Glutamate 92, aspartate 113, leucine 115, and aspartate 116 together coordinate Mg(2+). Residues 116–119 (DGSS), asparagine 209, tyrosine 242, and lysine 272 each bind substrate. Glutamate 278 lines the Mg(2+) pocket.

This sequence belongs to the FBPase class 1 family. Homotetramer. Requires Mg(2+) as cofactor.

It is found in the cytoplasm. The enzyme catalyses beta-D-fructose 1,6-bisphosphate + H2O = beta-D-fructose 6-phosphate + phosphate. Its pathway is carbohydrate biosynthesis; Calvin cycle. The protein is Fructose-1,6-bisphosphatase class 1 of Prosthecochloris aestuarii (strain DSM 271 / SK 413).